The primary structure comprises 132 residues: Ig kappa chain V-III region MOPC 321 (132 aa).

The N-terminal stretch at 1-20 (METDTLLLWVLLLWVPGSTG) is a signal peptide. The tract at residues 21-43 (DIVLTQSPASLAVSLGQRATISC) is framework-1. An intrachain disulfide couples Cys43 to Cys112. The tract at residues 44 to 58 (RASKSVNTYGNSFMZ) is complementarity-determining-1. A framework-2 region spans residues 59-73 (WYZZKPGZPPKLLIY). Residues 74–80 (RASNLZS) are complementarity-determining-2. The segment at 81–112 (GIPARFSGSGSRTBFTLTIBPVZABDVATYFC) is framework-3. Residues 113–121 (ZZSBZBPWT) are complementarity-determining-3. A framework-4 region spans residues 122-131 (FGSGTKLEIK).

The chain is Ig kappa chain V-III region MOPC 321 from Mus musculus (Mouse).